The sequence spans 412 residues: Ribosomal RNA large subunit methyltransferase G (412 aa).

The disordered stretch occupies residues 386-412; it reads KAEPHENGESSSDTPNPQSSLYGGVKR. A compositionally biased stretch (polar residues) spans 394–406; the sequence is ESSSDTPNPQSSL.

This sequence belongs to the methyltransferase superfamily. RlmG family.

It is found in the cytoplasm. It carries out the reaction guanosine(1835) in 23S rRNA + S-adenosyl-L-methionine = N(2)-methylguanosine(1835) in 23S rRNA + S-adenosyl-L-homocysteine + H(+). In terms of biological role, specifically methylates the guanine in position 1835 (m2G1835) of 23S rRNA. The polypeptide is Ribosomal RNA large subunit methyltransferase G (Shewanella sediminis (strain HAW-EB3)).